A 183-amino-acid polypeptide reads, in one-letter code: MDIDPYKEFGASVELLSFLPSDFFPSVRDLLDTATALYRDALESPEHCTPHHTALRHVCLCWGDLMNLATWVGTNLEDQASRDLVVSYVNTNMGLKFRQLLWFHISCLTFGRDLVLEYLVSFGVWIRTPPAYRPSNAPILSTLPETTVVRQRGRTIRRRTPSPRRRRSQSPRRRRSQSRESQC.

The disordered stretch occupies residues Arg150 to Cys183. Basic residues predominate over residues Gln151 to Ser176. The Bipartite nuclear localization signal signature appears at Arg158–Arg175. Phosphoserine; by host is present on residues Ser162 and Ser170. 2 tandem repeats follow at residues Ser162–Gln169 and Ser170–Gln177. Residues Ser162 to Gln177 are 2 X 8 AA repeats of S-P-R-R-R-[PR]-S-Q. Residues Gln177–Cys183 form an RNA binding region.

Belongs to the orthohepadnavirus core antigen family. Homodimerizes, then multimerizes. Interacts with cytosol exposed regions of viral L glycoprotein present in the reticulum-to-Golgi compartment. Interacts with human FLNB. Phosphorylated form interacts with host importin alpha; this interaction depends on the exposure of the NLS, which itself depends upon genome maturation and/or phosphorylation of the capsid protein. Interacts with host NUP153. In terms of processing, phosphorylated by host SRPK1, SRPK2, and maybe protein kinase C or GAPDH. Phosphorylation is critical for pregenomic RNA packaging. Protein kinase C phosphorylation is stimulated by HBx protein and may play a role in transport of the viral genome to the nucleus at the late step during the viral replication cycle.

The protein localises to the virion. Its subcellular location is the host cytoplasm. Its function is as follows. Self assembles to form an icosahedral capsid. Most capsids appear to be large particles with an icosahedral symmetry of T=4 and consist of 240 copies of capsid protein, though a fraction forms smaller T=3 particles consisting of 180 capsid proteins. Entering capsids are transported along microtubules to the nucleus. Phosphorylation of the capsid is thought to induce exposure of nuclear localization signal in the C-terminal portion of the capsid protein that allows binding to the nuclear pore complex via the importin (karyopherin-) alpha and beta. Capsids are imported in intact form through the nuclear pore into the nuclear basket, where it probably binds NUP153. Only capsids that contain the mature viral genome can release the viral DNA and capsid protein into the nucleoplasm. Immature capsids get stuck in the basket. Capsids encapsulate the pre-genomic RNA and the P protein. Pre-genomic RNA is reverse-transcribed into DNA while the capsid is still in the cytoplasm. The capsid can then either be directed to the nucleus, providing more genomes for transcription, or bud through the endoplasmic reticulum to provide new virions. The polypeptide is Capsid protein (Homo sapiens (Human)).